The chain runs to 356 residues: uncharacterized protein (356 aa).

The protein belongs to the NAD(P)-dependent epimerase/dehydratase family. NAD(+) is required as a cofactor. NADP(+) serves as cofactor.

In terms of biological role, putative nucleotide sugar epimerase/dehydrogenase. This is an uncharacterized protein from Sinorhizobium fredii (strain NBRC 101917 / NGR234).